Here is a 904-residue protein sequence, read N- to C-terminus: Mdm2-binding protein (904 aa).

Residues 19–38 (ASREAEHGPEVSSGEGTENQ) are disordered. Positions 521–904 (MILRKMDKIK…DWVLEKTSKK (384 aa)) are interaction with MDM2. 4 positions are modified to phosphoserine: S597, S639, S703, and S707. Disordered regions lie at residues 754–784 (ESSESLLSQTTGNSNHYHHHVTSRKPQTERS) and 800–830 (PKLATKTSSGQKSMHESKTSRQIKESRSQKH). The span at 812 to 830 (SMHESKTSRQIKESRSQKH) shows a compositional bias: basic and acidic residues.

It belongs to the MTBP family. In terms of assembly, interacts with MDM2.

In terms of biological role, inhibits cell migration in vitro and suppresses the invasive behavior of tumor cells. May play a role in MDM2-dependent p53/TP53 homeostasis in unstressed cells. Inhibits autoubiquitination of MDM2, thereby enhancing MDM2 stability. This promotes MDM2-mediated ubiquitination of p53/TP53 and its subsequent degradation. The polypeptide is Mdm2-binding protein (MTBP) (Homo sapiens (Human)).